Reading from the N-terminus, the 426-residue chain is Phosphomethylpyrimidine synthase (426 aa).

Substrate contacts are provided by residues asparagine 65, methionine 94, tyrosine 123, histidine 162, 184 to 186 (SRG), 225 to 228 (DGMR), and glutamate 264. Histidine 268 contributes to the Zn(2+) binding site. Tyrosine 291 provides a ligand contact to substrate. Residue histidine 332 coordinates Zn(2+). Cysteine 408, cysteine 411, and cysteine 415 together coordinate [4Fe-4S] cluster.

The protein belongs to the ThiC family. It depends on [4Fe-4S] cluster as a cofactor.

The catalysed reaction is 5-amino-1-(5-phospho-beta-D-ribosyl)imidazole + S-adenosyl-L-methionine = 4-amino-2-methyl-5-(phosphooxymethyl)pyrimidine + CO + 5'-deoxyadenosine + formate + L-methionine + 3 H(+). The protein operates within cofactor biosynthesis; thiamine diphosphate biosynthesis. In terms of biological role, catalyzes the synthesis of the hydroxymethylpyrimidine phosphate (HMP-P) moiety of thiamine from aminoimidazole ribotide (AIR) in a radical S-adenosyl-L-methionine (SAM)-dependent reaction. This chain is Phosphomethylpyrimidine synthase, found in Methanococcus maripaludis (strain C7 / ATCC BAA-1331).